The sequence spans 150 residues: Developmental pluripotency-associated protein 3 (150 aa).

Positions 1–22 are enriched in basic and acidic residues; that stretch reads MEEPSEKVDPMKDPETPQKKDE. The tract at residues 1-32 is disordered; it reads MEEPSEKVDPMKDPETPQKKDEEDALDDTDVL. Residues 1–75 form a required for H3K9me2-binding region; the sequence is MEEPSEKVDP…VPVENKSEKI (75 aa). Positions 76–150 are required to exclude TET3 from the maternal pronucleus; it reads RREVQSAFPK…PSENAKIGKN (75 aa).

In terms of tissue distribution, expressed in the immature oocytes and in newborn ovaries. Subsequently detected in maturing oocytes and in preimplantation embryos. Expressed in pluripotent embryonic but not in differentiated somatic cells. Expressed in blastocysts, epiblasts, primordial germ cells, embryonic gonads and primitive spermatogonia. No expression is detected in adult testes.

It is found in the nucleus. Its subcellular location is the cytoplasm. Primordial germ cell (PGCs)-specific protein involved in epigenetic chromatin reprogramming in the zygote following fertilization. In zygotes, DNA demethylation occurs selectively in the paternal pronucleus before the first cell division, while the adjacent maternal pronucleus and certain paternally-imprinted loci are protected from this process. Participates in protection of DNA methylation in the maternal pronucleus by preventing conversion of 5mC to 5hmC: specifically recognizes and binds histone H3 dimethylated at 'Lys-9' (H3K9me2) on maternal genome, and protects maternal genome from TET3-mediated conversion to 5hmC and subsequent DNA demethylation. Does not bind paternal chromatin, which is mainly packed into protamine and does not contain much H3K9me2 mark. Also protects imprinted loci that are marked with H3K9me2 in mature sperm from DNA demethylation in early embryogenesis. May be important for the totipotent/pluripotent states continuing through preimplantation development. Also involved in chromatin condensation in oocytogenesis. The chain is Developmental pluripotency-associated protein 3 (Dppa3) from Mus musculus (Mouse).